Here is an 86-residue protein sequence, read N- to C-terminus: MSVTPSPIETNAPKPLKKGSLVRVNPEAYKNSLESLASDQSSPEYIFEGPGELVAIKQDYGQVRWRRPVPDVWLRLDQLQAWTEGS.

It belongs to the complex I NdhO subunit family. NDH-1 can be composed of about 15 different subunits; different subcomplexes with different compositions have been identified which probably have different functions.

It localises to the cellular thylakoid membrane. The enzyme catalyses a plastoquinone + NADH + (n+1) H(+)(in) = a plastoquinol + NAD(+) + n H(+)(out). It catalyses the reaction a plastoquinone + NADPH + (n+1) H(+)(in) = a plastoquinol + NADP(+) + n H(+)(out). In terms of biological role, NDH-1 shuttles electrons from an unknown electron donor, via FMN and iron-sulfur (Fe-S) centers, to quinones in the respiratory and/or the photosynthetic chain. The immediate electron acceptor for the enzyme in this species is believed to be plastoquinone. Couples the redox reaction to proton translocation, and thus conserves the redox energy in a proton gradient. Cyanobacterial NDH-1 also plays a role in inorganic carbon-concentration. The sequence is that of NAD(P)H-quinone oxidoreductase subunit O from Prochlorococcus marinus (strain SARG / CCMP1375 / SS120).